The following is a 159-amino-acid chain: Ribosome-binding factor A (159 aa).

2 stretches are compositionally biased toward basic and acidic residues: residues 118–128 (AADDEVAKARE) and 137–146 (DPYKEPRVAS). The segment at 118–159 (AADDEVAKARENAQPAGDADPYKEPRVASDEDEASPDVREAD) is disordered.

It belongs to the RbfA family. In terms of assembly, monomer. Binds 30S ribosomal subunits, but not 50S ribosomal subunits or 70S ribosomes.

The protein resides in the cytoplasm. Its function is as follows. One of several proteins that assist in the late maturation steps of the functional core of the 30S ribosomal subunit. Associates with free 30S ribosomal subunits (but not with 30S subunits that are part of 70S ribosomes or polysomes). Required for efficient processing of 16S rRNA. May interact with the 5'-terminal helix region of 16S rRNA. This is Ribosome-binding factor A from Rhodococcus erythropolis (strain PR4 / NBRC 100887).